A 65-amino-acid polypeptide reads, in one-letter code: Large ribosomal subunit protein bL35 (65 aa).

The segment at 1–26 (MPKMKTNKSAQKRFKKTGSGRFKCKQ) is disordered. Positions 10–26 (AQKRFKKTGSGRFKCKQ) are enriched in basic residues.

The protein belongs to the bacterial ribosomal protein bL35 family.

In Hydrogenovibrio crunogenus (strain DSM 25203 / XCL-2) (Thiomicrospira crunogena), this protein is Large ribosomal subunit protein bL35.